A 242-amino-acid chain; its full sequence is Probable transcriptional regulatory protein NGO_1291 (242 aa).

Belongs to the TACO1 family.

It localises to the cytoplasm. This chain is Probable transcriptional regulatory protein NGO_1291, found in Neisseria gonorrhoeae (strain ATCC 700825 / FA 1090).